The primary structure comprises 381 residues: Beta-lactamase CMY-2 (381 aa).

An N-terminal signal peptide occupies residues 1 to 20 (MMKKSLCCALLLTASFSTFA). The active-site Acyl-ester intermediate is serine 84. A beta-lactam contacts are provided by serine 84, glutamine 140, tyrosine 170, and asparagine 172.

This sequence belongs to the class-C beta-lactamase family.

It catalyses the reaction a beta-lactam + H2O = a substituted beta-amino acid. Its activity is regulated as follows. Inhibited by the beta-lactamase-blocking agents sulbactam, tazobactam, avibactam and 3-aminophenylboronic acid (APB). Class C beta-lactamase which confers resistance to penicillins and cephalosporins. Has nitrocefin-, cefoxitin- and cefoperazone-hydrolyzing activities. The protein is Beta-lactamase CMY-2 of Klebsiella pneumoniae.